The chain runs to 395 residues: MLGRSRLTFVLLAAAVTCAEAQHAPPWTEDCRKSTYPPSGPTYRGPVPWYTINLDLPPYKRWHELMVDKGPMLKIIVNSFKNMVNTFVPSGKVMQMVDQKLPDLLGQFSGPYEEEMKGIADVTEIPLGEIISFNIFYELFTMCTSIITEDKKGHLLHVRNMDFGIFLGWNINNNTWVITEELKPLTVNLDFQRNSKTVFKATSFAGYVGMLTGFKPGQFSLTLNERFSMNGGYLGLLEWILGKKDASWIGFITRSVLENATSYEEAKNILAKTKLLAPAYFILGGNQSGEGCVITRERKDSLDIYELDPKQGRWYVVQTNYDRWKNPLFLDDRRTPAQTCLKRTTQENLSFATLYDILSTKPVLNKLTVFTALMDVTKNHYEAYLRDCPDPCVGW.

A signal peptide spans 1–21; that stretch reads MLGRSRLTFVLLAAAVTCAEA. A disulfide bridge connects residues C31 and C340. The Nucleophile role is filled by C143. 4 N-linked (GlcNAc...) asparagine glycosylation sites follow: N173, N259, N286, and N348. C388 and C392 are joined by a disulfide.

It belongs to the acid ceramidase family. As to quaternary structure, heterodimer; disulfide-linked. The heterodimer is composed of the disulfide-linked alpha and beta chains produced by autocatalytic cleavage of the precursor. Post-translationally, N-glycosylated. Proteolytically cleaved into two chains alpha and beta that remain associated via a disulfide bond. Cleavage gives rise to a conformation change that activates the enzyme. The same catalytic Cys residue mediates the autoproteolytic cleavage and subsequent hydrolysis of lipid substrates. The beta chain may undergo an additional C-terminal processing.

The protein resides in the lysosome. The protein localises to the secreted. The catalysed reaction is an N-acylsphing-4-enine + H2O = sphing-4-enine + a fatty acid. The enzyme catalyses N-dodecanoylsphing-4-enine + H2O = dodecanoate + sphing-4-enine. It catalyses the reaction N-tetradecanoylsphing-4-enine + H2O = tetradecanoate + sphing-4-enine. It carries out the reaction N-hexadecanoylsphing-4-enine + H2O = sphing-4-enine + hexadecanoate. The catalysed reaction is N-octadecanoylsphing-4-enine + H2O = sphing-4-enine + octadecanoate. The enzyme catalyses N-dodecanoyl-(4R)-hydroxysphinganine + H2O = (4R)-hydroxysphinganine + dodecanoate. It catalyses the reaction N-(dodecanoyl)-sphinganine + H2O = dodecanoate + sphinganine. It carries out the reaction N-(acetyl)-sphing-4-enine + H2O = sphing-4-enine + acetate. The catalysed reaction is N-(hexanoyl)sphing-4-enine + H2O = hexanoate + sphing-4-enine. The enzyme catalyses N-octanoylsphing-4-enine + H2O = octanoate + sphing-4-enine. It catalyses the reaction N-(9Z-octadecenoyl)-sphing-4-enine + H2O = sphing-4-enine + (9Z)-octadecenoate. It carries out the reaction N-dodecanoylethanolamine + H2O = dodecanoate + ethanolamine. The protein operates within lipid metabolism; sphingolipid metabolism. In terms of biological role, lysosomal ceramidase that hydrolyzes sphingolipid ceramides into sphingosine and free fatty acids at acidic pH. Ceramides, sphingosine, and its phosphorylated form sphingosine-1-phosphate are bioactive lipids that mediate cellular signaling pathways regulating several biological processes including cell proliferation, apoptosis and differentiation. Has a higher catalytic efficiency towards C12-ceramides versus other ceramides. Also catalyzes the reverse reaction allowing the synthesis of ceramides from fatty acids and sphingosine. For the reverse synthetic reaction, the natural sphingosine D-erythro isomer is more efficiently utilized as a substrate compared to D-erythro-dihydrosphingosine and D-erythro-phytosphingosine, while the fatty acids with chain lengths of 12 or 14 carbons are the most efficiently used. Also has an N-acylethanolamine hydrolase activity. By regulating the levels of ceramides, sphingosine and sphingosine-1-phosphate in the epidermis, mediates the calcium-induced differentiation of epidermal keratinocytes. Also indirectly regulates tumor necrosis factor/TNF-induced apoptosis. By regulating the intracellular balance between ceramides and sphingosine, in adrenocortical cells, probably also acts as a regulator of steroidogenesis. The protein is Acid ceramidase of Heterocephalus glaber (Naked mole rat).